Consider the following 257-residue polypeptide: MSLEIVPFVVAIPARFSASRLPGKPLRLLGGRPLIHRVAERALSAGAREVWVATDDVRIAEAVASLDGVHVAITANTHLSGSDRLAECARIAGWDPEVCVVNLQGDEPFAPAAGIRAVAALLHHSNADMATLATTIDKSEDLFNPNIVKLVCNAHGEALYFSRAPIPWNRDTFATTREPTPLGPWLRHIGLYACNAGFLQRFTTMQPGTLEQIESLEQLRVLEAGHRIAVRITPEHFPPGIDTPEDLAKAEKALEDV.

It belongs to the KdsB family.

The protein localises to the cytoplasm. It carries out the reaction 3-deoxy-alpha-D-manno-oct-2-ulosonate + CTP = CMP-3-deoxy-beta-D-manno-octulosonate + diphosphate. It functions in the pathway nucleotide-sugar biosynthesis; CMP-3-deoxy-D-manno-octulosonate biosynthesis; CMP-3-deoxy-D-manno-octulosonate from 3-deoxy-D-manno-octulosonate and CTP: step 1/1. It participates in bacterial outer membrane biogenesis; lipopolysaccharide biosynthesis. Its function is as follows. Activates KDO (a required 8-carbon sugar) for incorporation into bacterial lipopolysaccharide in Gram-negative bacteria. This Xylella fastidiosa (strain M12) protein is 3-deoxy-manno-octulosonate cytidylyltransferase.